Here is a 292-residue protein sequence, read N- to C-terminus: NAD kinase (292 aa).

The active-site Proton acceptor is the Asp73. NAD(+)-binding positions include 73–74 (DG), 147–148 (NE), His158, Arg175, Asp177, 188–193 (TAYSLS), and Gln247.

This sequence belongs to the NAD kinase family. A divalent metal cation is required as a cofactor.

Its subcellular location is the cytoplasm. It catalyses the reaction NAD(+) + ATP = ADP + NADP(+) + H(+). Functionally, involved in the regulation of the intracellular balance of NAD and NADP, and is a key enzyme in the biosynthesis of NADP. Catalyzes specifically the phosphorylation on 2'-hydroxyl of the adenosine moiety of NAD to yield NADP. This chain is NAD kinase, found in Escherichia coli O157:H7.